A 310-amino-acid chain; its full sequence is Apolipoprotein E (310 aa).

The first 18 residues, Met-1 to Ser-18, serve as a signal peptide directing secretion. 8 tandem repeats follow at residues Val-72 to Gly-93, Pro-94 to Gly-115, Ala-116 to Gly-137, Gln-138 to Met-159, Arg-160 to Glu-181, Arg-182 to Ala-203, Asn-204 to Arg-225, and Gly-226 to Glu-247. Positions Val-72–Glu-247 are 8 X 22 AA approximate tandem repeats. A Methionine sulfoxide modification is found at Met-135. The LDL and other lipoprotein receptors binding stretch occupies residues His-150–Arg-160. Residues His-150 to Arg-160 form an LDL receptor binding region. A heparin-binding site is contributed by Met-154–Arg-157. The lipid-binding and lipoprotein association stretch occupies residues Thr-202–Met-282. Gly-221–Leu-228 lines the heparin pocket. The segment at Gln-258–Gln-310 is homooligomerization. The segment at Arg-270–Met-282 is specificity for association with VLDL.

The protein belongs to the apolipoprotein A1/A4/E family. Homotetramer. May interact with ABCA1; functionally associated with ABCA1 in the biogenesis of HDLs. May interact with APP/A4 amyloid-beta peptide; the interaction is extremely stable in vitro but its physiological significance is unclear. May interact with MAPT. May interact with MAP2. In the cerebrospinal fluid, interacts with secreted SORL1. Interacts with PMEL; this allows the loading of PMEL luminal fragment on ILVs to induce fibril nucleation. APOE exists as multiple glycosylated and sialylated glycoforms within cells and in plasma. The extent of glycosylation and sialylation are tissue and context specific. Post-translationally, glycated in plasma VLDL. In terms of processing, phosphorylated by FAM20C in the extracellular medium.

It is found in the secreted. It localises to the extracellular space. The protein resides in the extracellular matrix. The protein localises to the extracellular vesicle. Its subcellular location is the endosome. It is found in the multivesicular body. APOE is an apolipoprotein, a protein associating with lipid particles, that mainly functions in lipoprotein-mediated lipid transport between organs via the plasma and interstitial fluids. APOE is a core component of plasma lipoproteins and is involved in their production, conversion and clearance. Apolipoproteins are amphipathic molecules that interact both with lipids of the lipoprotein particle core and the aqueous environment of the plasma. As such, APOE associates with chylomicrons, chylomicron remnants, very low density lipoproteins (VLDL) and intermediate density lipoproteins (IDL) but shows a preferential binding to high-density lipoproteins (HDL). It also binds a wide range of cellular receptors including the LDL receptor/LDLR, the LDL receptor-related proteins LRP1, LRP2 and LRP8 and the very low-density lipoprotein receptor/VLDLR that mediate the cellular uptake of the APOE-containing lipoprotein particles. Finally, APOE also has a heparin-binding activity and binds heparan-sulfate proteoglycans on the surface of cells, a property that supports the capture and the receptor-mediated uptake of APOE-containing lipoproteins by cells. A main function of APOE is to mediate lipoprotein clearance through the uptake of chylomicrons, VLDLs, and HDLs by hepatocytes. APOE is also involved in the biosynthesis by the liver of VLDLs as well as their uptake by peripheral tissues ensuring the delivery of triglycerides and energy storage in muscle, heart and adipose tissues. By participating in the lipoprotein-mediated distribution of lipids among tissues, APOE plays a critical role in plasma and tissues lipid homeostasis. APOE is also involved in two steps of reverse cholesterol transport, the HDLs-mediated transport of cholesterol from peripheral tissues to the liver, and thereby plays an important role in cholesterol homeostasis. First, it is functionally associated with ABCA1 in the biogenesis of HDLs in tissues. Second, it is enriched in circulating HDLs and mediates their uptake by hepatocytes. APOE also plays an important role in lipid transport in the central nervous system, regulating neuron survival and sprouting. The chain is Apolipoprotein E (Apoe) from Grammomys surdaster (African woodland thicket rat).